The following is a 301-amino-acid chain: Structure-specific endonuclease subunit SLX1 (301 aa).

The region spanning 12-95 (AFYCCYLLRS…QHPYQTRFIK (84 aa)) is the GIY-YIG domain. An SLX1-type zinc finger spans residues 216–283 (CAICEKIVDY…IPTSGQCPNC (68 aa)).

Belongs to the SLX1 family. In terms of assembly, forms a heterodimer with SLX4. A divalent metal cation is required as a cofactor.

The protein resides in the nucleus. Functionally, catalytic subunit of the SLX1-SLX4 structure-specific endonuclease that resolves DNA secondary structures generated during DNA repair and recombination. Has endonuclease activity towards branched DNA substrates, introducing single-strand cuts in duplex DNA close to junctions with ss-DNA. The polypeptide is Structure-specific endonuclease subunit SLX1 (Eremothecium gossypii (strain ATCC 10895 / CBS 109.51 / FGSC 9923 / NRRL Y-1056) (Yeast)).